A 206-amino-acid chain; its full sequence is Ribosomal RNA large subunit methyltransferase E (206 aa).

Residues glycine 60, tryptophan 62, aspartate 80, aspartate 96, and aspartate 121 each contribute to the S-adenosyl-L-methionine site. The active-site Proton acceptor is lysine 161.

Belongs to the class I-like SAM-binding methyltransferase superfamily. RNA methyltransferase RlmE family.

It localises to the cytoplasm. It carries out the reaction uridine(2552) in 23S rRNA + S-adenosyl-L-methionine = 2'-O-methyluridine(2552) in 23S rRNA + S-adenosyl-L-homocysteine + H(+). Its function is as follows. Specifically methylates the uridine in position 2552 of 23S rRNA at the 2'-O position of the ribose in the fully assembled 50S ribosomal subunit. In Saccharophagus degradans (strain 2-40 / ATCC 43961 / DSM 17024), this protein is Ribosomal RNA large subunit methyltransferase E.